Consider the following 128-residue polypeptide: Large ribosomal subunit protein bL20 (128 aa).

The protein belongs to the bacterial ribosomal protein bL20 family.

In terms of biological role, binds directly to 23S ribosomal RNA and is necessary for the in vitro assembly process of the 50S ribosomal subunit. It is not involved in the protein synthesizing functions of that subunit. This is Large ribosomal subunit protein bL20 from Corynebacterium efficiens (strain DSM 44549 / YS-314 / AJ 12310 / JCM 11189 / NBRC 100395).